A 93-amino-acid polypeptide reads, in one-letter code: Putative pterin-4-alpha-carbinolamine dehydratase (93 aa).

Belongs to the pterin-4-alpha-carbinolamine dehydratase family.

The catalysed reaction is (4aS,6R)-4a-hydroxy-L-erythro-5,6,7,8-tetrahydrobiopterin = (6R)-L-erythro-6,7-dihydrobiopterin + H2O. In Thermomicrobium roseum (strain ATCC 27502 / DSM 5159 / P-2), this protein is Putative pterin-4-alpha-carbinolamine dehydratase.